The primary structure comprises 1103 residues: Voltage-dependent calcium channel subunit alpha-2/delta-1 (1103 aa).

Residues 1 to 24 (MAAGCLLALTLTLFQSGLIGPSSE) form the signal peptide. Topologically, residues 25–1073 (EPFPSPVTIK…VLEDYTDCGG (1049 aa)) are extracellular. N-linked (GlcNAc...) asparagine glycosylation occurs at asparagine 92. Serine 119 is modified (phosphoserine). N-linked (GlcNAc...) asparagine glycosylation is found at asparagine 136 and asparagine 184. A VWFA domain is found at 253–430 (DMLILVDVSG…INTQEYLDVL (178 aa)). Residues aspartate 259, serine 261, and serine 263 each contribute to the a divalent metal cation site. The MIDAS-like motif motif lies at 259–263 (DVSGS). Residues asparagine 324 and asparagine 348 are each glycosylated (N-linked (GlcNAc...) asparagine). Cysteine 404 and cysteine 1059 are disulfide-bonded. One can recognise a Cache domain in the interval 446-537 (WTNVYLDALE…QPKPIGVGIP (92 aa)). N-linked (GlcNAc...) asparagine glycosylation is found at asparagine 613, asparagine 781, and asparagine 888. A helical membrane pass occupies residues 1074–1094 (VSGLNPSLWSIFGLQFILLWL). At 1095–1103 (VSGSRHYLL) the chain is on the cytoplasmic side.

Belongs to the calcium channel subunit alpha-2/delta family. In terms of assembly, dimer formed of alpha-2-1 and delta-1 chains; disulfide-linked. Voltage-dependent calcium channels are multisubunit complexes, consisting of alpha-1 (CACNA1), alpha-2 (CACNA2D), beta (CACNB) and delta (CACNA2D) subunits in a 1:1:1:1 ratio. In terms of processing, proteolytically processed into subunits alpha-2-1 and delta-1 that are disulfide-linked. In terms of tissue distribution, isoform 2A is expressed in skeletal muscle and aorta. Isoform 2B is expressed in brain. Isoform 2C is expressed in heart. Isoform 2D is expressed in heart and smooth muscle. Isoform 2E is expressed in smooth muscle. All five isoforms are expressed in the cardiovascular system.

The protein resides in the membrane. It is found in the cell membrane. The alpha-2/delta subunit of voltage-dependent calcium channels regulates calcium current density and activation/inactivation kinetics of the calcium channel. Plays an important role in excitation-contraction coupling. The polypeptide is Voltage-dependent calcium channel subunit alpha-2/delta-1 (Cacna2d1) (Mus musculus (Mouse)).